The following is a 405-amino-acid chain: SPbeta prophage-derived uncharacterized protein YonJ (405 aa).

A coiled-coil region spans residues 72 to 101 (DESNNSLLELELKKVEIMEERKKLQAVKHE).

In Bacillus subtilis (strain 168), this protein is SPbeta prophage-derived uncharacterized protein YonJ (yonJ).